Consider the following 235-residue polypeptide: Mediator of RNA polymerase II transcription subunit 29 (235 aa).

A compositionally biased stretch (low complexity) spans 1–14 (MMNQMGMMMQQQGV). The segment at 1–54 (MMNQMGMMMQQQGVGVPGGPGGVGGVGMPGPGGVGVAPGMMQSPQMQQAQQQQV) is disordered. Positions 15–36 (GVPGGPGGVGGVGMPGPGGVGV) are enriched in gly residues. Residues 37–54 (APGMMQSPQMQQAQQQQV) show a composition bias toward low complexity.

The protein belongs to the Mediator complex subunit 29 family. As to quaternary structure, component of the Mediator complex.

It is found in the nucleus. In terms of biological role, component of the Mediator complex, a coactivator involved in the regulated transcription of nearly all RNA polymerase II-dependent genes. Mediator functions as a bridge to convey information from gene-specific regulatory proteins to the basal RNA polymerase II transcription machinery. Mediator is recruited to promoters by direct interactions with regulatory proteins and serves as a scaffold for the assembly of a functional preinitiation complex with RNA polymerase II and the general transcription factors. The polypeptide is Mediator of RNA polymerase II transcription subunit 29 (ix) (Anopheles gambiae (African malaria mosquito)).